Here is a 157-residue protein sequence, read N- to C-terminus: 2-C-methyl-D-erythritol 2,4-cyclodiphosphate synthase (157 aa).

A divalent metal cation contacts are provided by D8 and H10. Residues 8-10 and 34-35 contribute to the 4-CDP-2-C-methyl-D-erythritol 2-phosphate site; these read DVH and HS. A divalent metal cation is bound at residue H42. Residues 56–58, 61–65, 100–106, 132–135, F139, and R142 contribute to the 4-CDP-2-C-methyl-D-erythritol 2-phosphate site; these read DIG, FPDTD, AQAPKMA, and TTTE.

This sequence belongs to the IspF family. Homotrimer. Requires a divalent metal cation as cofactor.

It catalyses the reaction 4-CDP-2-C-methyl-D-erythritol 2-phosphate = 2-C-methyl-D-erythritol 2,4-cyclic diphosphate + CMP. Its pathway is isoprenoid biosynthesis; isopentenyl diphosphate biosynthesis via DXP pathway; isopentenyl diphosphate from 1-deoxy-D-xylulose 5-phosphate: step 4/6. Functionally, involved in the biosynthesis of isopentenyl diphosphate (IPP) and dimethylallyl diphosphate (DMAPP), two major building blocks of isoprenoid compounds. Catalyzes the conversion of 4-diphosphocytidyl-2-C-methyl-D-erythritol 2-phosphate (CDP-ME2P) to 2-C-methyl-D-erythritol 2,4-cyclodiphosphate (ME-CPP) with a corresponding release of cytidine 5-monophosphate (CMP). The protein is 2-C-methyl-D-erythritol 2,4-cyclodiphosphate synthase of Pseudomonas aeruginosa (strain UCBPP-PA14).